Consider the following 576-residue polypeptide: Rho GTPase-activating protein gacP (576 aa).

The stretch at 123-189 (LKSIIKTELK…RTNFERVGID (67 aa)) forms a coiled coil. Residues 277–462 (EDLSVLLNRE…TIIQNFDRIF (186 aa)) form the Rho-GAP domain. The interval 472–576 (VPDTYVPPPN…DEGDAVELSD (105 aa)) is disordered. Over residues 482–500 (NTRNNSVNNFNNVQPSSFS) the composition is skewed to low complexity. Over residues 501 to 513 (ASTSRSINLNKST) the composition is skewed to polar residues. The span at 514 to 530 (NNPNINDDNNNNNNINN) shows a compositional bias: low complexity. Acidic residues predominate over residues 565 to 576 (SFDEGDAVELSD).

The protein localises to the cytoplasm. Rho GTPase-activating protein involved in the signal transduction pathway. This chain is Rho GTPase-activating protein gacP (gacP), found in Dictyostelium discoideum (Social amoeba).